Reading from the N-terminus, the 87-residue chain is Large ribosomal subunit protein bL27 (87 aa).

The tract at residues 1-21 (MAHKKAGGSSRNGRDSESKRL) is disordered.

Belongs to the bacterial ribosomal protein bL27 family.

This chain is Large ribosomal subunit protein bL27, found in Burkholderia multivorans (strain ATCC 17616 / 249).